We begin with the raw amino-acid sequence, 352 residues long: Peptide chain release factor 1 (352 aa).

Gln-229 is modified (N5-methylglutamine).

Belongs to the prokaryotic/mitochondrial release factor family. Methylated by PrmC. Methylation increases the termination efficiency of RF1.

The protein resides in the cytoplasm. Functionally, peptide chain release factor 1 directs the termination of translation in response to the peptide chain termination codons UAG and UAA. This Acidiphilium cryptum (strain JF-5) protein is Peptide chain release factor 1.